A 188-amino-acid polypeptide reads, in one-letter code: Elongation factor P (188 aa).

At Lys34 the chain carries N6-(3,6-diaminohexanoyl)-5-hydroxylysine.

Belongs to the elongation factor P family. Post-translationally, may be beta-lysylated on the epsilon-amino group of Lys-34 by the combined action of EpmA and EpmB, and then hydroxylated on the C5 position of the same residue by EpmC (if this protein is present). Lysylation is critical for the stimulatory effect of EF-P on peptide-bond formation. The lysylation moiety may extend toward the peptidyltransferase center and stabilize the terminal 3-CCA end of the tRNA. Hydroxylation of the C5 position on Lys-34 may allow additional potential stabilizing hydrogen-bond interactions with the P-tRNA.

The protein localises to the cytoplasm. Its pathway is protein biosynthesis; polypeptide chain elongation. Its function is as follows. Involved in peptide bond synthesis. Alleviates ribosome stalling that occurs when 3 or more consecutive Pro residues or the sequence PPG is present in a protein, possibly by augmenting the peptidyl transferase activity of the ribosome. Modification of Lys-34 is required for alleviation. This Erwinia tasmaniensis (strain DSM 17950 / CFBP 7177 / CIP 109463 / NCPPB 4357 / Et1/99) protein is Elongation factor P.